The chain runs to 257 residues: MGNGECLEGGRKAAVILTSSRHAIAFTGAGISTESGIPDFRGPQGLWRRFDPALASIDYLNTDPKGFWEFYIERFRVLNNARPNKAHLALAELEKLGIIKYVITQNIDNLHQSAGSINVIELHGNYTTVYCMRCKTQYPFTLALRKYEEGENPPRCPKCGGILRPNVVLFGEPVNEINRALEIAALSDVALVVGSSLTVYPAAYVPLVVKEHGGRLIIINLEPTDYDDYADVVLHCSASEALDLVLNEVKGIMAAGN.

The region spanning 3-252 (NGECLEGGRK…DLVLNEVKGI (250 aa)) is the Deacetylase sirtuin-type domain. NAD(+)-binding residues include alanine 29, threonine 33, phenylalanine 40, arginine 41, glutamine 105, isoleucine 107, aspartate 108, and histidine 123. Phenylalanine 40 is a nicotinamide binding site. Residues isoleucine 107 and aspartate 108 each coordinate nicotinamide. The Proton acceptor role is filled by histidine 123. Zn(2+)-binding residues include cysteine 131, cysteine 134, cysteine 156, and cysteine 159. Serine 195, serine 196, and asparagine 220 together coordinate NAD(+).

It belongs to the sirtuin family. Class U subfamily. The cofactor is Zn(2+).

The protein localises to the cytoplasm. The enzyme catalyses N(6)-acetyl-L-lysyl-[protein] + NAD(+) + H2O = 2''-O-acetyl-ADP-D-ribose + nicotinamide + L-lysyl-[protein]. Functionally, NAD-dependent protein deacetylase which modulates the activities of several enzymes which are inactive in their acetylated form. Deacetylates the N-terminal lysine residue of Alba, the major archaeal chromatin protein and that, in turn, increases Alba's DNA binding affinity, thereby repressing transcription. The sequence is that of NAD-dependent protein deacetylase from Caldivirga maquilingensis (strain ATCC 700844 / DSM 13496 / JCM 10307 / IC-167).